The sequence spans 442 residues: MAATDLERFSNAEAEPRSLSLGGHVGFDSLPDQLVSKSVTQGFSFNILCVGETGIGKSTLMNTLFNTTFETEEASHHEACVRLRPQTYDLQESNVQLKLTIVDAVGFGDQINKDESYRPIVDYIDAQFENYLQEELKIRRSLFDYHDTRIHVCLYFITPTGHSLKSLDLVTMKKLDSKVNIIPIIAKADTISKSELHKFKIKIMGELVSNGVQIYQFPTDDEAVAEINAVMNAHLPFAVVGSTEEVKVGNKLVRARQYPWGVVQVENENHCDFVKLREMLIRVNMEDLREQTHSRHYELYRRCKLEEMGFQDSDGDSQPFSLQETYEAKRKEFLSELQRKEEEMRQMFVNKVKETELELKEKERELHEKFEHLKRVHQEEKRKVEEKRRELEEETNAFNRRKAAVEALQSQALHATSQQPLRKDKDKKKASGWSSIYSVTIP.

Alanine 2 carries the N-acetylalanine modification. Serine 10 carries the post-translational modification Phosphoserine. One can recognise a Septin-type G domain in the interval 41-307 (QGFSFNILCV…ELYRRCKLEE (267 aa)). Residues 51-58 (GETGIGKS) form a G1 motif region. Residues 51-58 (GETGIGKS), glycine 106, 187-195 (KADTISKSE), glycine 241, and arginine 256 each bind GTP. Positions 103 to 106 (DAVG) are G3 motif. A G4 motif region spans residues 186 to 189 (AKAD). Residues 322–410 (LQETYEAKRK…RKAAVEALQS (89 aa)) are a coiled coil. Basic and acidic residues predominate over residues 377–391 (HQEEKRKVEEKRREL). The disordered stretch occupies residues 377-442 (HQEEKRKVEE…WSSIYSVTIP (66 aa)). 2 stretches are compositionally biased toward polar residues: residues 408-420 (LQSQ…SQQP) and 432-442 (GWSSIYSVTIP).

The protein belongs to the TRAFAC class TrmE-Era-EngA-EngB-Septin-like GTPase superfamily. Septin GTPase family. Septins polymerize into heterooligomeric protein complexes that form filaments, and can associate with cellular membranes, actin filaments and microtubules. GTPase activity is required for filament formation. Interacts with CDK14, SEPTIN4, SEPTIN5 and SEPTIN7. Interacts with VAMP2; the interaction inhibits interaction of VAMP2 with SYP. Interacts with STX1A.

The protein resides in the cytoplasm. It localises to the cytoskeleton. Its subcellular location is the synapse. It is found in the cell projection. The protein localises to the axon. The protein resides in the cytoplasmic vesicle. It localises to the secretory vesicle. Its subcellular location is the synaptic vesicle membrane. It is found in the presynapse. In terms of biological role, filament-forming cytoskeletal GTPase. May play a role in platelet secretion. Seems to participate in the process of SNARE complex formation in synaptic vesicles. This is Septin-8 from Callithrix jacchus (White-tufted-ear marmoset).